A 737-amino-acid polypeptide reads, in one-letter code: Zinc finger protein 585A (737 aa).

A KRAB domain is found at Met-1 to Pro-65. C2H2-type zinc fingers lie at residues Tyr-126–His-148, Phe-154–His-176, Tyr-182–His-204, His-210–His-232, Tyr-238–His-260, and Tyr-266–His-288. The C2H2-type 7; degenerate zinc-finger motif lies at Tyr-294–Gln-316. C2H2-type zinc fingers lie at residues Ser-322 to His-344, Tyr-350 to His-372, Tyr-378 to His-400, Tyr-406 to His-428, Tyr-434 to His-456, Tyr-462 to His-484, Tyr-490 to His-512, Tyr-518 to His-540, Tyr-546 to His-568, Tyr-574 to His-596, Tyr-602 to His-624, Tyr-630 to His-652, Tyr-658 to His-680, Tyr-686 to His-708, and Tyr-714 to His-736.

This sequence belongs to the krueppel C2H2-type zinc-finger protein family.

The protein localises to the nucleus. Functionally, may be involved in transcriptional regulation. The sequence is that of Zinc finger protein 585A (ZNF585A) from Pongo abelii (Sumatran orangutan).